Here is a 175-residue protein sequence, read N- to C-terminus: Gamma-crystallin B (175 aa).

2 Beta/gamma crystallin 'Greek key' domains span residues 2 to 40 and 41 to 83; these read GKIT…RVDS and GCWM…CLIP. A connecting peptide region spans residues 84–88; sequence QHSGT. Beta/gamma crystallin 'Greek key' domains follow at residues 89-129 and 130-172; these read YRMR…NVME and GCWV…RRVM.

Belongs to the beta/gamma-crystallin family.

In terms of biological role, crystallins are the dominant structural components of the vertebrate eye lens. The polypeptide is Gamma-crystallin B (Crygb) (Mus musculus (Mouse)).